A 162-amino-acid polypeptide reads, in one-letter code: Ribosomal RNA large subunit methyltransferase H (162 aa).

Residues Leu78, Gly109, and 128–133 (LSPLTL) contribute to the S-adenosyl-L-methionine site.

This sequence belongs to the RNA methyltransferase RlmH family. As to quaternary structure, homodimer.

It localises to the cytoplasm. It carries out the reaction pseudouridine(1915) in 23S rRNA + S-adenosyl-L-methionine = N(3)-methylpseudouridine(1915) in 23S rRNA + S-adenosyl-L-homocysteine + H(+). Functionally, specifically methylates the pseudouridine at position 1915 (m3Psi1915) in 23S rRNA. The protein is Ribosomal RNA large subunit methyltransferase H of Psychrobacter sp. (strain PRwf-1).